Reading from the N-terminus, the 360-residue chain is NAD(P)H-quinone oxidoreductase subunit 1, chloroplastic (360 aa).

9 helical membrane-spanning segments follow: residues 27–47, 98–118, 129–149, 165–185, 203–223, 248–268, 269–289, 297–317, and 340–360; these read IWIF…VLVI, FSIG…VIPF, IGIF…LMSG, AAQS…ISLL, FWGW…ISSL, YSGI…LISS, LFVT…ISIL, IFGT…FLFI, and FLLP…LFSL.

It belongs to the complex I subunit 1 family. In terms of assembly, NDH is composed of at least 16 different subunits, 5 of which are encoded in the nucleus.

It is found in the plastid. Its subcellular location is the chloroplast thylakoid membrane. It carries out the reaction a plastoquinone + NADH + (n+1) H(+)(in) = a plastoquinol + NAD(+) + n H(+)(out). The catalysed reaction is a plastoquinone + NADPH + (n+1) H(+)(in) = a plastoquinol + NADP(+) + n H(+)(out). NDH shuttles electrons from NAD(P)H:plastoquinone, via FMN and iron-sulfur (Fe-S) centers, to quinones in the photosynthetic chain and possibly in a chloroplast respiratory chain. The immediate electron acceptor for the enzyme in this species is believed to be plastoquinone. Couples the redox reaction to proton translocation, and thus conserves the redox energy in a proton gradient. The sequence is that of NAD(P)H-quinone oxidoreductase subunit 1, chloroplastic from Lepidium virginicum (Virginia pepperweed).